We begin with the raw amino-acid sequence, 511 residues long: Ribonuclease Y (511 aa).

The chain crosses the membrane as a helical span at residues 3 to 23; the sequence is VGILIGIIILGVVGFIQYTLI. One can recognise a KH domain in the interval 201 to 286; it reads TVHVVALPND…EMVERAIKDV (86 aa). The HD domain occupies 327 to 420; sequence VLKHSIEVSY…VQAADAISAA (94 aa).

This sequence belongs to the RNase Y family.

Its subcellular location is the cell membrane. Endoribonuclease that initiates mRNA decay. In Clostridium perfringens (strain SM101 / Type A), this protein is Ribonuclease Y.